Reading from the N-terminus, the 564-residue chain is Arginine--tRNA ligase (564 aa).

Residues 124–134 carry the 'HIGH' region motif; it reads PNIAKDMHVGH.

It belongs to the class-I aminoacyl-tRNA synthetase family. In terms of assembly, monomer.

The protein localises to the cytoplasm. The enzyme catalyses tRNA(Arg) + L-arginine + ATP = L-arginyl-tRNA(Arg) + AMP + diphosphate. This chain is Arginine--tRNA ligase, found in Chlamydia caviae (strain ATCC VR-813 / DSM 19441 / 03DC25 / GPIC) (Chlamydophila caviae).